The following is a 192-amino-acid chain: Xanthine phosphoribosyltransferase (192 aa).

Xanthine contacts are provided by Leu-20 and Asn-27. Ala-128–Ala-132 provides a ligand contact to 5-phospho-alpha-D-ribose 1-diphosphate. Lys-156 provides a ligand contact to xanthine.

This sequence belongs to the purine/pyrimidine phosphoribosyltransferase family. Xpt subfamily. As to quaternary structure, homodimer.

It localises to the cytoplasm. It carries out the reaction XMP + diphosphate = xanthine + 5-phospho-alpha-D-ribose 1-diphosphate. It participates in purine metabolism; XMP biosynthesis via salvage pathway; XMP from xanthine: step 1/1. Converts the preformed base xanthine, a product of nucleic acid breakdown, to xanthosine 5'-monophosphate (XMP), so it can be reused for RNA or DNA synthesis. This is Xanthine phosphoribosyltransferase from Listeria monocytogenes serotype 4b (strain CLIP80459).